Here is a 588-residue protein sequence, read N- to C-terminus: Ankyrin repeat and SOCS box protein 15 (588 aa).

11 ANK repeats span residues 75-104 (KGWF…KTLW), 110-139 (DGET…WPNT), 143-172 (KGET…SLDQ), 176-205 (KRWS…NVHL), 209-238 (FGVT…DVLA), 242-271 (DGAS…SGNI), 275-304 (AGHL…KHAI), 307-336 (SGLT…DVNS), 349-378 (ERKT…DPNL), 379-408 (DPLN…NVNC), and 416-444 (TRFP…QVEM). In terms of domain architecture, SOCS box spans 524–579 (WPEIRQILENPCSLKHLCRLKIRRLMGLQRLCQPTLMEKLSLPPTIQRYILFKEYD).

The protein belongs to the ankyrin SOCS box (ASB) family.

It participates in protein modification; protein ubiquitination. May be a substrate-recognition component of a SCF-like ECS (Elongin-Cullin-SOCS-box protein) E3 ubiquitin-protein ligase complex which mediates the ubiquitination and subsequent proteasomal degradation of target proteins. This is Ankyrin repeat and SOCS box protein 15 (ASB15) from Bos taurus (Bovine).